We begin with the raw amino-acid sequence, 82 residues long: Toxin Tpa7 (82 aa).

The first 20 residues, 1–20, serve as a signal peptide directing secretion; that stretch reads MKGMILLISCLMLIEVVVEC. The region spanning 21–82 is the LCN-type CS-alpha/beta domain; it reads KEGYPLDTLN…KIWDLKKNKC (62 aa). Cystine bridges form between C32-C82, C36-C58, C44-C63, and C48-C65.

The protein belongs to the long (4 C-C) scorpion toxin superfamily. Sodium channel inhibitor family. Beta subfamily. In terms of tissue distribution, expressed by the venom gland.

The protein localises to the secreted. In terms of biological role, beta toxins bind voltage-independently at site-4 of sodium channels (Nav) and shift the voltage of activation toward more negative potentials thereby affecting sodium channel activation and promoting spontaneous and repetitive firing. The polypeptide is Toxin Tpa7 (Tityus pachyurus (Colombian scorpion)).